The primary structure comprises 135 residues: Small ribosomal subunit protein bS16m (135 aa).

The N-terminal 34 residues, 1–34, are a transit peptide targeting the mitochondrion; sequence MVQLTTVLCKAYRGGHLTIRLALGGCTNRPFYRI. Residue Thr130 is modified to Phosphothreonine.

This sequence belongs to the bacterial ribosomal protein bS16 family. In terms of assembly, component of the mitochondrial ribosome small subunit (28S) which comprises a 12S rRNA and about 30 distinct proteins.

Its subcellular location is the mitochondrion. The protein is Small ribosomal subunit protein bS16m (MRPS16) of Bos taurus (Bovine).